The following is a 557-amino-acid chain: Formate--tetrahydrofolate ligase (557 aa).

Residue 66-73 (TPAGEGKS) coordinates ATP.

Belongs to the formate--tetrahydrofolate ligase family.

It carries out the reaction (6S)-5,6,7,8-tetrahydrofolate + formate + ATP = (6R)-10-formyltetrahydrofolate + ADP + phosphate. It participates in one-carbon metabolism; tetrahydrofolate interconversion. In Clostridium botulinum (strain ATCC 19397 / Type A), this protein is Formate--tetrahydrofolate ligase.